A 162-amino-acid chain; its full sequence is Cytochrome c-type biogenesis protein CcmE (162 aa).

At M1–R7 the chain is on the cytoplasmic side. The chain crosses the membrane as a helical; Signal-anchor for type II membrane protein span at residues L8–A28. At L29 to Q162 the chain is on the periplasmic side. H122 and Y126 together coordinate heme. Positions H140–Q162 are disordered.

It belongs to the CcmE/CycJ family.

It is found in the cell inner membrane. Functionally, heme chaperone required for the biogenesis of c-type cytochromes. Transiently binds heme delivered by CcmC and transfers the heme to apo-cytochromes in a process facilitated by CcmF and CcmH. The polypeptide is Cytochrome c-type biogenesis protein CcmE (Nitrobacter winogradskyi (strain ATCC 25391 / DSM 10237 / CIP 104748 / NCIMB 11846 / Nb-255)).